We begin with the raw amino-acid sequence, 427 residues long: 3-phosphoshikimate 1-carboxyvinyltransferase (427 aa).

3-phosphoshikimate is bound by residues lysine 20, serine 21, and arginine 25. Lysine 20 contributes to the phosphoenolpyruvate binding site. Residues glycine 92 and arginine 120 each contribute to the phosphoenolpyruvate site. The 3-phosphoshikimate site is built by serine 166, glutamine 168, aspartate 312, and lysine 339. Glutamine 168 contributes to the phosphoenolpyruvate binding site. Aspartate 312 functions as the Proton acceptor in the catalytic mechanism. Phosphoenolpyruvate contacts are provided by arginine 343 and arginine 385.

This sequence belongs to the EPSP synthase family. Monomer.

It is found in the cytoplasm. It catalyses the reaction 3-phosphoshikimate + phosphoenolpyruvate = 5-O-(1-carboxyvinyl)-3-phosphoshikimate + phosphate. Its pathway is metabolic intermediate biosynthesis; chorismate biosynthesis; chorismate from D-erythrose 4-phosphate and phosphoenolpyruvate: step 6/7. In terms of biological role, catalyzes the transfer of the enolpyruvyl moiety of phosphoenolpyruvate (PEP) to the 5-hydroxyl of shikimate-3-phosphate (S3P) to produce enolpyruvyl shikimate-3-phosphate and inorganic phosphate. The sequence is that of 3-phosphoshikimate 1-carboxyvinyltransferase from Streptococcus gordonii (strain Challis / ATCC 35105 / BCRC 15272 / CH1 / DL1 / V288).